Here is a 284-residue protein sequence, read N- to C-terminus: MSADGRSGRLRFTKMHGAGNDFVVLDLRDGTPPPDAALAAQLADRHFGVGCDQILTIEAPRSEGAVAAYGIWNSDGSAARQCGNGARCVAAWLVRDGIAQCERFIIDSPVTAHAVERLEGGRYAVAMGMPQFDPPQIPLAGFAHARDEYALPVHGDTVRFGAVSMGNPHAVVEVGRVDAAPVERVGTLLQQNAAFPDSVNVGFVQVVDPTHVRLRVFERGVGETLACGSGACAAAVVLMQRCRVERDVQVSLPGGELRIRWPCDHEQVVMSGPAVFVFDGEWNG.

Positions 20, 53, and 73 each coordinate substrate. Cysteine 82 serves as the catalytic Proton donor. Substrate is bound by residues 83–84, asparagine 167, asparagine 200, and 218–219; these read GN and ER. Cysteine 227 serves as the catalytic Proton acceptor. A substrate-binding site is contributed by 228 to 229; that stretch reads GS.

It belongs to the diaminopimelate epimerase family. In terms of assembly, homodimer.

The protein resides in the cytoplasm. It catalyses the reaction (2S,6S)-2,6-diaminopimelate = meso-2,6-diaminopimelate. Its pathway is amino-acid biosynthesis; L-lysine biosynthesis via DAP pathway; DL-2,6-diaminopimelate from LL-2,6-diaminopimelate: step 1/1. Functionally, catalyzes the stereoinversion of LL-2,6-diaminopimelate (L,L-DAP) to meso-diaminopimelate (meso-DAP), a precursor of L-lysine and an essential component of the bacterial peptidoglycan. The sequence is that of Diaminopimelate epimerase from Xanthomonas oryzae pv. oryzae (strain MAFF 311018).